Here is a 413-residue protein sequence, read N- to C-terminus: EFNHTGELLATGDKGGRVVIFQREQESKNQVHRRGEYNVYSTFQSHEPEFDYLKSLEIEEKINKIRWLPQQNAAYFLLSTNDKTVKLWKVSERDKRPEGYNLKDEEGRLRDPATITTLRVPVLRPMDLMVEATPRRVFANAHTYHINSISVNSDYETYMSADDLRINLWNFEITNQSFNIVDIKPANMEELTEVITAAEFHPHHCNTFVYSSSKGTIRLCDMRASALCDRHTKFFEEPEDPSNRSFFSEIISSISDVKFSHSGRYIMTRDYLTVKVWDLNMENRPIETYQVHDYLRSKLCSLYENDCIFDKFECVWNGSDSVIMTGSYNNFFRMFDRNTKRDVTLEASRENSKPRAILKPRKVCVGGKRRKDEISVDSLDFSKKILHTAWHPSENIIAVAATNNLYIFQDKVN.

4 WD repeats span residues 1 to 31 (EFNH…KNQV), 57 to 98 (EIEE…KRPE), 141 to 179 (AHTY…QSFN), and 190 to 230 (ELTE…LCDR). The residue at position 245 (Ser245) is a Phosphoserine. WD repeat units follow at residues 249 to 287 (EIIS…RPIE), 304 to 345 (ENDC…DVTL), and 380 to 412 (DFSK…QDKV). Tyr265 bears the Phosphotyrosine mark. Position 268 is a phosphothreonine (Thr268).

It belongs to the phosphatase 2A regulatory subunit B family. PP2A consists of a common heterodimeric core enzyme, composed of a 36 kDa catalytic subunit (subunit C) and a 65 kDa constant regulatory subunit (PR65 or subunit A), that associates with a variety of regulatory subunits. Proteins that associate with the core dimer include three families of regulatory subunits B (the R2/B/PR55/B55, R3/B''/PR72/PR130/PR59 and R5/B'/B56 families), the 48 kDa variable regulatory subunit, viral proteins, and cell signaling molecules. Interacts with TOMM22. Interacts with IER5 (via N- and C-terminal regions). Brain.

The protein localises to the cytoplasm. Its subcellular location is the cytoskeleton. It is found in the membrane. Functionally, the B regulatory subunit might modulate substrate selectivity and catalytic activity, and might also direct the localization of the catalytic enzyme to a particular subcellular compartment. The protein is Serine/threonine-protein phosphatase 2A 55 kDa regulatory subunit B beta isoform (PPP2R2B) of Oryctolagus cuniculus (Rabbit).